The sequence spans 316 residues: tRNA dimethylallyltransferase (316 aa).

Position 9–16 (G9–S16) interacts with ATP. T11–S16 contributes to the substrate binding site. Interaction with substrate tRNA regions lie at residues D34 to Q37 and Q158 to R162.

It belongs to the IPP transferase family. Monomer. Requires Mg(2+) as cofactor.

The catalysed reaction is adenosine(37) in tRNA + dimethylallyl diphosphate = N(6)-dimethylallyladenosine(37) in tRNA + diphosphate. In terms of biological role, catalyzes the transfer of a dimethylallyl group onto the adenine at position 37 in tRNAs that read codons beginning with uridine, leading to the formation of N6-(dimethylallyl)adenosine (i(6)A). In Hyphomonas neptunium (strain ATCC 15444), this protein is tRNA dimethylallyltransferase.